A 149-amino-acid polypeptide reads, in one-letter code: Large ribosomal subunit protein bL9 (149 aa).

The protein belongs to the bacterial ribosomal protein bL9 family.

Functionally, binds to the 23S rRNA. The protein is Large ribosomal subunit protein bL9 of Aliivibrio fischeri (strain ATCC 700601 / ES114) (Vibrio fischeri).